The sequence spans 662 residues: UvrABC system protein B (662 aa).

The region spanning 25–414 (AGLNSKKRSQ…GTVVELIIRP (390 aa)) is the Helicase ATP-binding domain. 38-45 (GITGSGKT) contributes to the ATP binding site. A Beta-hairpin motif is present at residues 91–114 (YYDYYQPEAYIVRTDTFIEKDSSI). Residues 430–592 (QVEDLISEIQ…IIPKTINSAI (163 aa)) enclose the Helicase C-terminal domain. Residues 622 to 657 (KSYMDKLKKEMFKAASNLEFEQAAKLRNQLKTLEKA) enclose the UVR domain.

It belongs to the UvrB family. Forms a heterotetramer with UvrA during the search for lesions. Interacts with UvrC in an incision complex.

Its subcellular location is the cytoplasm. In terms of biological role, the UvrABC repair system catalyzes the recognition and processing of DNA lesions. A damage recognition complex composed of 2 UvrA and 2 UvrB subunits scans DNA for abnormalities. Upon binding of the UvrA(2)B(2) complex to a putative damaged site, the DNA wraps around one UvrB monomer. DNA wrap is dependent on ATP binding by UvrB and probably causes local melting of the DNA helix, facilitating insertion of UvrB beta-hairpin between the DNA strands. Then UvrB probes one DNA strand for the presence of a lesion. If a lesion is found the UvrA subunits dissociate and the UvrB-DNA preincision complex is formed. This complex is subsequently bound by UvrC and the second UvrB is released. If no lesion is found, the DNA wraps around the other UvrB subunit that will check the other stand for damage. The sequence is that of UvrABC system protein B from Rickettsia typhi (strain ATCC VR-144 / Wilmington).